A 228-amino-acid polypeptide reads, in one-letter code: Putative N-acetylmannosamine-6-phosphate 2-epimerase (228 aa).

It belongs to the NanE family.

It carries out the reaction an N-acyl-D-glucosamine 6-phosphate = an N-acyl-D-mannosamine 6-phosphate. The protein operates within amino-sugar metabolism; N-acetylneuraminate degradation; D-fructose 6-phosphate from N-acetylneuraminate: step 3/5. In terms of biological role, converts N-acetylmannosamine-6-phosphate (ManNAc-6-P) to N-acetylglucosamine-6-phosphate (GlcNAc-6-P). In Lactiplantibacillus plantarum (strain ATCC BAA-793 / NCIMB 8826 / WCFS1) (Lactobacillus plantarum), this protein is Putative N-acetylmannosamine-6-phosphate 2-epimerase.